The chain runs to 462 residues: Glycerol-3-phosphate acyltransferase ATS12, chloroplastic (462 aa).

A chloroplast-targeting transit peptide spans 1-82 (MFILSSSSST…DKESAQSAAT (82 aa)). Positions 233–238 (HQTEAD) match the HXXXXD motif motif.

This sequence belongs to the GPAT/DAPAT family.

It localises to the plastid. The protein resides in the chloroplast stroma. It carries out the reaction a fatty acyl-[ACP] + sn-glycerol 3-phosphate = a 1-acyl-sn-glycero-3-phosphate + holo-[ACP]. The catalysed reaction is sn-glycerol 3-phosphate + an acyl-CoA = a 1-acyl-sn-glycero-3-phosphate + CoA. The protein operates within phospholipid metabolism; CDP-diacylglycerol biosynthesis; CDP-diacylglycerol from sn-glycerol 3-phosphate: step 1/3. In terms of biological role, esterifies the acyl-group from acyl-acyl carrier proteins (acyl-ACPs) to the sn-1 position of glycerol-3-phosphate. The physiological acyl donors in chloroplasts are acyl-ACPs, but acyl-CoAs are used as artificial donor for in vitro reactions. The enzyme from chilling-resistant plants discriminates against non-fluid palmitic acid and selects oleic acid whereas the enzyme from sensitive plants accepts both fatty acids. Squash is chilling-sensitive. Does not seem to discriminate between the acyl-ACP thioesters 18:1-ACP, 18:0-ACP and 16:0-ACP. Exhibits higher selectivity for 16:0-CoA than 18:1-CoA in vitro. The polypeptide is Glycerol-3-phosphate acyltransferase ATS12, chloroplastic (Cucurbita moschata (Winter crookneck squash)).